We begin with the raw amino-acid sequence, 149 residues long: Endoribonuclease YbeY (149 aa).

The Zn(2+) site is built by histidine 106, histidine 110, and histidine 116.

It belongs to the endoribonuclease YbeY family. It depends on Zn(2+) as a cofactor.

Its subcellular location is the cytoplasm. Its function is as follows. Single strand-specific metallo-endoribonuclease involved in late-stage 70S ribosome quality control and in maturation of the 3' terminus of the 16S rRNA. This is Endoribonuclease YbeY from Methylobacillus flagellatus (strain ATCC 51484 / DSM 6875 / VKM B-1610 / KT).